A 357-amino-acid chain; its full sequence is Naringenin,2-oxoglutarate 3-dioxygenase (357 aa).

Positions 189–293 (CVDMDQKIVV…RLSIATFQNP (105 aa)) constitute a Fe2OG dioxygenase domain. The Fe cation site is built by His-216, Asp-218, and His-274. Arg-284 serves as a coordination point for 2-oxoglutarate.

The protein belongs to the iron/ascorbate-dependent oxidoreductase family. It depends on Fe(2+) as a cofactor. Requires L-ascorbate as cofactor.

The catalysed reaction is a (2S)-flavan-4-one + 2-oxoglutarate + O2 = a (2R,3R)-dihydroflavonol + succinate + CO2. It functions in the pathway secondary metabolite biosynthesis; flavonoid biosynthesis. Catalyzes the 3-beta-hydroxylation of 2S-flavanones to 2R,3R-dihydroflavonols which are intermediates in the biosynthesis of flavonols, anthocyanidins, catechins and proanthocyanidins in plants. This Matthiola incana (Common stock) protein is Naringenin,2-oxoglutarate 3-dioxygenase (FHT).